Here is a 218-residue protein sequence, read N- to C-terminus: Phosphoribosylformylglycinamidine synthase subunit PurQ (218 aa).

Positions Thr2–Asn218 constitute a Glutamine amidotransferase type-1 domain. The active-site Nucleophile is Cys86. Catalysis depends on residues His194 and Glu196.

As to quaternary structure, part of the FGAM synthase complex composed of 1 PurL, 1 PurQ and 2 PurS subunits.

It localises to the cytoplasm. It catalyses the reaction N(2)-formyl-N(1)-(5-phospho-beta-D-ribosyl)glycinamide + L-glutamine + ATP + H2O = 2-formamido-N(1)-(5-O-phospho-beta-D-ribosyl)acetamidine + L-glutamate + ADP + phosphate + H(+). It carries out the reaction L-glutamine + H2O = L-glutamate + NH4(+). It functions in the pathway purine metabolism; IMP biosynthesis via de novo pathway; 5-amino-1-(5-phospho-D-ribosyl)imidazole from N(2)-formyl-N(1)-(5-phospho-D-ribosyl)glycinamide: step 1/2. Its function is as follows. Part of the phosphoribosylformylglycinamidine synthase complex involved in the purines biosynthetic pathway. Catalyzes the ATP-dependent conversion of formylglycinamide ribonucleotide (FGAR) and glutamine to yield formylglycinamidine ribonucleotide (FGAM) and glutamate. The FGAM synthase complex is composed of three subunits. PurQ produces an ammonia molecule by converting glutamine to glutamate. PurL transfers the ammonia molecule to FGAR to form FGAM in an ATP-dependent manner. PurS interacts with PurQ and PurL and is thought to assist in the transfer of the ammonia molecule from PurQ to PurL. This chain is Phosphoribosylformylglycinamidine synthase subunit PurQ, found in Prochlorococcus marinus (strain SARG / CCMP1375 / SS120).